The chain runs to 215 residues: Ribose-5-phosphate isomerase A (215 aa).

Residues 26–29, 79–82, and 92–95 contribute to the substrate site; these read TGST, DGAD, and KGGG. The Proton acceptor role is filled by glutamate 101. Position 119 (lysine 119) interacts with substrate.

Belongs to the ribose 5-phosphate isomerase family. As to quaternary structure, homodimer.

It catalyses the reaction aldehydo-D-ribose 5-phosphate = D-ribulose 5-phosphate. It participates in carbohydrate degradation; pentose phosphate pathway; D-ribose 5-phosphate from D-ribulose 5-phosphate (non-oxidative stage): step 1/1. In terms of biological role, catalyzes the reversible conversion of ribose-5-phosphate to ribulose 5-phosphate. In Xylella fastidiosa (strain 9a5c), this protein is Ribose-5-phosphate isomerase A.